We begin with the raw amino-acid sequence, 965 residues long: Villin-3 (965 aa).

Gelsolin-like repeat units lie at residues 27 to 79 (ENFE…DEAG), 150 to 190 (VHLK…QERA), 262 to 304 (GQVE…EERK), 401 to 452 (ANSK…EDQE), 533 to 573 (NKAL…EQQE), and 635 to 676 (FQVE…KEKQ). 2 stretches are compositionally biased toward low complexity: residues 769 to 780 (AFNSSSGRTSSP) and 808 to 828 (SSPS…ASQR). Disordered stretches follow at residues 769–828 (AFNS…ASQR) and 840–906 (TAEK…GVTF). Positions 865 to 879 (EATEEATEAKEEEEV) are enriched in acidic residues. Phosphoserine is present on Ser880. Residues 900-965 (ETTGVTFTYE…DLLKKKFNLF (66 aa)) form the HP domain.

It belongs to the villin/gelsolin family. Expressed in all tissues examined, including root hairs.

It is found in the cytoplasm. The protein resides in the cytoskeleton. Binds actin and actin filament bundles in a Ca(2+)-insensitive manner, but severs actin filaments in a calcium-dependent manner, regardless of the presence or not of VLN1 (AC O81643). Acts redundantly with VLN2 (AC O81644) to generate thick actin filament bundles, to regulate directional organ growth and in sclerenchyma development. The protein is Villin-3 of Arabidopsis thaliana (Mouse-ear cress).